Consider the following 249-residue polypeptide: 5'-nucleotidase SurE (249 aa).

A divalent metal cation contacts are provided by aspartate 8, aspartate 9, serine 39, and asparagine 91.

This sequence belongs to the SurE nucleotidase family. A divalent metal cation serves as cofactor.

It is found in the cytoplasm. It catalyses the reaction a ribonucleoside 5'-phosphate + H2O = a ribonucleoside + phosphate. Functionally, nucleotidase that shows phosphatase activity on nucleoside 5'-monophosphates. The protein is 5'-nucleotidase SurE of Pseudomonas aeruginosa (strain LESB58).